The following is a 364-amino-acid chain: Methylthioribose-1-phosphate isomerase (364 aa).

Aspartate 246 (proton donor) is an active-site residue.

Belongs to the eIF-2B alpha/beta/delta subunits family. MtnA subfamily.

It is found in the cytoplasm. It localises to the nucleus. The enzyme catalyses 5-(methylsulfanyl)-alpha-D-ribose 1-phosphate = 5-(methylsulfanyl)-D-ribulose 1-phosphate. Its pathway is amino-acid biosynthesis; L-methionine biosynthesis via salvage pathway; L-methionine from S-methyl-5-thio-alpha-D-ribose 1-phosphate: step 1/6. In terms of biological role, catalyzes the interconversion of methylthioribose-1-phosphate (MTR-1-P) into methylthioribulose-1-phosphate (MTRu-1-P). This Bombyx mori (Silk moth) protein is Methylthioribose-1-phosphate isomerase.